A 522-amino-acid polypeptide reads, in one-letter code: Protein nucleotidyltransferase YdiU (522 aa).

ATP-binding residues include G109, G111, R112, K132, D144, G145, R195, and R202. The active-site Proton acceptor is D271. 2 residues coordinate Mg(2+): N272 and D281. An ATP-binding site is contributed by D281.

This sequence belongs to the SELO family. Mg(2+) is required as a cofactor. The cofactor is Mn(2+).

It catalyses the reaction L-seryl-[protein] + ATP = 3-O-(5'-adenylyl)-L-seryl-[protein] + diphosphate. The enzyme catalyses L-threonyl-[protein] + ATP = 3-O-(5'-adenylyl)-L-threonyl-[protein] + diphosphate. It carries out the reaction L-tyrosyl-[protein] + ATP = O-(5'-adenylyl)-L-tyrosyl-[protein] + diphosphate. The catalysed reaction is L-histidyl-[protein] + UTP = N(tele)-(5'-uridylyl)-L-histidyl-[protein] + diphosphate. It catalyses the reaction L-seryl-[protein] + UTP = O-(5'-uridylyl)-L-seryl-[protein] + diphosphate. The enzyme catalyses L-tyrosyl-[protein] + UTP = O-(5'-uridylyl)-L-tyrosyl-[protein] + diphosphate. Its function is as follows. Nucleotidyltransferase involved in the post-translational modification of proteins. It can catalyze the addition of adenosine monophosphate (AMP) or uridine monophosphate (UMP) to a protein, resulting in modifications known as AMPylation and UMPylation. The protein is Protein nucleotidyltransferase YdiU of Burkholderia lata (strain ATCC 17760 / DSM 23089 / LMG 22485 / NCIMB 9086 / R18194 / 383).